We begin with the raw amino-acid sequence, 1744 residues long: Myotubularin-related protein 5 (1744 aa).

A uDENN domain is found at 14–150 (DTVAVIVLEE…IRFLTYELVE (137 aa)). One can recognise a cDENN domain in the interval 165–304 (ELGFELIPIS…YYNSLHQRLR (140 aa)). In terms of domain architecture, dDENN spans 306–412 (VMFTTTSQED…LTRALPRRKH (107 aa)). The 85-residue stretch at 787–871 (KGNFDPVLAH…LYSMESFKKL (85 aa)) folds into the GRAM domain. The Myotubularin phosphatase domain occupies 996 to 1447 (NAHIRYAVID…PQIHMWPFLA (452 aa)). The segment covering 1102–1116 (TGSMTGSQQTLHSKA) has biased composition (polar residues). Positions 1102–1123 (TGSMTGSQQTLHSKASSNEESS) are disordered. The segment at 1540 to 1590 (IHELTPFTVGARPVQCCYCTNILTRWSKAVHCKKCRIHVHEGCVNRNITIG) adopts a Phorbol-ester/DAG-type zinc-finger fold. In terms of domain architecture, PH spans 1643–1743 (PPLCTGYLSK…WKECIEQVIR (101 aa)).

Belongs to the protein-tyrosine phosphatase family. Non-receptor class myotubularin subfamily.

Functionally, probably acts as an adapter for other myotubularin-like phosphatases. The protein is Myotubularin-related protein 5 of Caenorhabditis elegans.